Here is a 119-residue protein sequence, read N- to C-terminus: Holo-[acyl-carrier-protein] synthase (119 aa).

The Mg(2+) site is built by Asp8 and Glu59.

The protein belongs to the P-Pant transferase superfamily. AcpS family. Mg(2+) is required as a cofactor.

It localises to the cytoplasm. The enzyme catalyses apo-[ACP] + CoA = holo-[ACP] + adenosine 3',5'-bisphosphate + H(+). Functionally, transfers the 4'-phosphopantetheine moiety from coenzyme A to a Ser of acyl-carrier-protein. The sequence is that of Holo-[acyl-carrier-protein] synthase from Staphylococcus aureus (strain USA300).